A 126-amino-acid polypeptide reads, in one-letter code: MHAIMLKAKLHRAEVTHSVLDYEGSCAIDGEWLDLAGIHEYEQIQIYNVDNGERFTTYAIRAEDGSKMISVNGAAAHKAQKGDRVIICAYAHYSEAELATHKPRMLYMAPGNVLSHTSNAIPVQVA.

Residue Ser25 is the Schiff-base intermediate with substrate; via pyruvic acid of the active site. Ser25 is modified (pyruvic acid (Ser)). Residue Thr57 participates in substrate binding. Tyr58 (proton donor) is an active-site residue. 73–75 provides a ligand contact to substrate; sequence GAA.

It belongs to the PanD family. As to quaternary structure, heterooctamer of four alpha and four beta subunits. It depends on pyruvate as a cofactor. In terms of processing, is synthesized initially as an inactive proenzyme, which is activated by self-cleavage at a specific serine bond to produce a beta-subunit with a hydroxyl group at its C-terminus and an alpha-subunit with a pyruvoyl group at its N-terminus.

Its subcellular location is the cytoplasm. The catalysed reaction is L-aspartate + H(+) = beta-alanine + CO2. It functions in the pathway cofactor biosynthesis; (R)-pantothenate biosynthesis; beta-alanine from L-aspartate: step 1/1. Its function is as follows. Catalyzes the pyruvoyl-dependent decarboxylation of aspartate to produce beta-alanine. This chain is Aspartate 1-decarboxylase, found in Azotobacter vinelandii (strain DJ / ATCC BAA-1303).